The sequence spans 720 residues: DNA replication licensing factor mcm7-B (720 aa).

A C4-type zinc finger spans residues 183 to 210 (CDQCGAETYQPIQSPTFMPLIMCPSREC). The 207-residue stretch at 331–537 (FYEKLAASIA…NDLRLAQHIT (207 aa)) folds into the MCM domain. Positions 344, 383, 385, 386, 387, 488, 513, and 603 each coordinate ATP. Positions 512–515 (SRFD) match the Arginine finger motif.

This sequence belongs to the MCM family. In terms of assembly, component of the mcm2-7 complex (RLF-M). The complex forms a toroidal hexameric ring with the proposed subunit order mcm2-mcm6-mcm4-mcm7-mcm3-mcm5. The heterodimer of mmcm3/mcm5 interacts with mcm4, mmcm6, mcm7 and weakly with mcm2. The N-terminus is required for interaction with mmcm3, though this interaction may not be direct, and remains in a complex with mmcm3 throughout the cell cycle. Begins to associate with zmcm6 at the neurula stage. Component of the replisome complex. Component of the CMG helicase complex, composed of the mcm2-7 complex, the GINS complex and cdc45. In terms of processing, ubiquitinated by traip when forks converge following formation of DNA interstrand cross-links. Short ubiquitin chains on mcm7 promote recruitment of DNA glycosylase neil3. If the interstrand cross-link cannot be cleaved by neil3, the ubiquitin chains continue to grow on mcm7, promoting the unloading of the CMG helicase complex by the vcp/p97 ATPase.

It is found in the nucleus. The protein localises to the chromosome. The enzyme catalyses ATP + H2O = ADP + phosphate + H(+). Acts as a component of the mcm2-7 complex (mcm complex) which is the putative replicative helicase essential for 'once per cell cycle' DNA replication initiation and elongation in eukaryotic cells. The active ATPase sites in the mcm2-7 ring are formed through the interaction surfaces of two neighboring subunits such that a critical structure of a conserved arginine finger motif is provided in trans relative to the ATP-binding site of the Walker A box of the adjacent subunit. The six ATPase active sites, however, are likely to contribute differentially to the complex helicase activity. The existence of maternal and zygotic forms of mcm3 and mcm6 suggests that specific forms of mcm2-7 complexes may be used during different stages of development. The sequence is that of DNA replication licensing factor mcm7-B (mcm7-b) from Xenopus laevis (African clawed frog).